Consider the following 475-residue polypeptide: Probable phenylalanine--tRNA ligase alpha subunit (475 aa).

The tract at residues 2 to 151 is contains the major tRNA-Phe binding sites; sequence TAVAQKIIEN…KRKLVSRRKK (150 aa). L-phenylalanine is bound by residues T309, 351–353, and Y391; that span reads QVE. Mg(2+) is bound at residue E393. Position 417 (F417) interacts with L-phenylalanine.

Belongs to the class-II aminoacyl-tRNA synthetase family. Phe-tRNA synthetase alpha subunit type 2 subfamily. In terms of assembly, tetramer of two alpha and two beta subunits. The cofactor is Mg(2+).

It is found in the cytoplasm. The catalysed reaction is tRNA(Phe) + L-phenylalanine + ATP = L-phenylalanyl-tRNA(Phe) + AMP + diphosphate + H(+). This is Probable phenylalanine--tRNA ligase alpha subunit from Encephalitozoon cuniculi (strain GB-M1) (Microsporidian parasite).